Consider the following 145-residue polypeptide: uncharacterized protein (145 aa).

2 consecutive transmembrane segments (helical) span residues L20–F40 and M116–A136.

Its subcellular location is the membrane. This is an uncharacterized protein from Saccharomyces cerevisiae (strain ATCC 204508 / S288c) (Baker's yeast).